The sequence spans 355 residues: 3'-5' exonuclease (355 aa).

The interval 1-119 (MDKFLIKMPI…TPSPEKVKPE (119 aa)) is disordered. 2 stretches are compositionally biased toward basic and acidic residues: residues 13–29 (KNNE…KETP) and 71–91 (KNLD…ENPP). Residues serine 104 and serine 112 each carry the phosphoserine modification. Positions 154 to 315 (TDVDVVPMAF…GQVIYRDLEQ (162 aa)) constitute a 3'-5' exonuclease domain. 3 residues coordinate Mg(2+): aspartate 164, glutamate 166, and aspartate 302.

It belongs to the WRNexo family.

It localises to the nucleus. Functionally, has exonuclease activity on both single-stranded and duplex templates bearing overhangs, but not blunt ended duplex DNA, and cleaves in a 3'-5' direction. Essential for the formation of DNA replication focal centers. Has an important role in maintaining genome stability. The sequence is that of 3'-5' exonuclease from Drosophila persimilis (Fruit fly).